The following is a 233-amino-acid chain: MENKVTAYSIYNKKAKKNTKVNPLDEVFPQLPRKKYQVIYADPPWDYGGKMQYDKSTIKSENEGFKRDIFISSASFKYPTLKLKELQQLDVPSITADDCILFMWTTGPQMANSILLGESWGFEYKTVAFVWDKMVHNPGRYTLSQTEFVLVFKKGKIPTPRGARNVRQLLQIHRGQHSEKPYAVIDGITKMFPALDKIELFARNNFVGWDNWGLEIPDNKIEIPTQGEIDENK.

The protein belongs to the MT-A70-like family.

It carries out the reaction a 2'-deoxyadenosine in DNA + S-adenosyl-L-methionine = an N(6)-methyl-2'-deoxyadenosine in DNA + S-adenosyl-L-homocysteine + H(+). Its function is as follows. A methylase that recognizes the double-stranded sequence 5'-CAATTG-3', methylates A-3 on both strands, and protects the DNA from cleavage by the MunI endonuclease. The polypeptide is Type II methyltransferase M.MunI (Mycoplasma sp).